A 333-amino-acid chain; its full sequence is Acetyl-coenzyme A carboxylase carboxyl transferase subunit alpha (333 aa).

Positions 48–308 constitute a CoA carboxyltransferase C-terminal domain; that stretch reads LLEQKVDALR…KEMLVEELRD (261 aa).

This sequence belongs to the AccA family. In terms of assembly, acetyl-CoA carboxylase is a heterohexamer composed of biotin carboxyl carrier protein (AccB), biotin carboxylase (AccC) and two subunits each of ACCase subunit alpha (AccA) and ACCase subunit beta (AccD).

Its subcellular location is the cytoplasm. The catalysed reaction is N(6)-carboxybiotinyl-L-lysyl-[protein] + acetyl-CoA = N(6)-biotinyl-L-lysyl-[protein] + malonyl-CoA. Its pathway is lipid metabolism; malonyl-CoA biosynthesis; malonyl-CoA from acetyl-CoA: step 1/1. In terms of biological role, component of the acetyl coenzyme A carboxylase (ACC) complex. First, biotin carboxylase catalyzes the carboxylation of biotin on its carrier protein (BCCP) and then the CO(2) group is transferred by the carboxyltransferase to acetyl-CoA to form malonyl-CoA. The protein is Acetyl-coenzyme A carboxylase carboxyl transferase subunit alpha of Chlorobium limicola (strain DSM 245 / NBRC 103803 / 6330).